The sequence spans 82 residues: U-scoloptoxin(21)-Sm3a (82 aa).

The first 21 residues, 1–21, serve as a signal peptide directing secretion; sequence MKIIALLLMVFLDFIIVNXAE.

Belongs to the scoloptoxin-21 family. In terms of tissue distribution, expressed by the venom gland.

It localises to the secreted. This Scolopendra morsitans (Tanzanian blue ringleg centipede) protein is U-scoloptoxin(21)-Sm3a.